A 194-amino-acid polypeptide reads, in one-letter code: dCTP deaminase (194 aa).

Residues R110 to R115, D128, V136 to E138, Y171, K178, and Q182 each bind dCTP. E138 acts as the Proton donor/acceptor in catalysis.

The protein belongs to the dCTP deaminase family. In terms of assembly, homotrimer.

The enzyme catalyses dCTP + H2O + H(+) = dUTP + NH4(+). Its pathway is pyrimidine metabolism; dUMP biosynthesis; dUMP from dCTP (dUTP route): step 1/2. Its function is as follows. Catalyzes the deamination of dCTP to dUTP. The sequence is that of dCTP deaminase from Psychromonas ingrahamii (strain DSM 17664 / CCUG 51855 / 37).